The primary structure comprises 352 residues: MTIQEIRQYLTQFFDPVELVGEGDAVIAGPAKIESAARGEVSFIANEKYLRYLSLTSASLVIVHRSVDVSLYAGERSFLKVSDPYTAFVFVLQKFARPRTLAKPGVAPTAAIGGGVSLGEGVAVGEHAVIGDRCSIGAGTVIAPNAVIMHDVKIGEGCTIFPQVTIYDGTLIGDRVVIHAGSVIGADGFGFAPQPDGSYVKIPQMGVVEIGDDAEIGANATIDRATMGSTVIAKGVKVDNLVQVAHNCRIGEHTVIAAQAGISGSTIMGRGCMIGGQAGFAGHLELADRTHVAAQAGVSKSFLEPGTALRGYPAQPMREQLRHEAMLRHLGSMKEKIDRIDRELKEQGASRD.

H246 acts as the Proton acceptor in catalysis.

The protein belongs to the transferase hexapeptide repeat family. LpxD subfamily. Homotrimer.

The catalysed reaction is a UDP-3-O-[(3R)-3-hydroxyacyl]-alpha-D-glucosamine + a (3R)-hydroxyacyl-[ACP] = a UDP-2-N,3-O-bis[(3R)-3-hydroxyacyl]-alpha-D-glucosamine + holo-[ACP] + H(+). Its pathway is bacterial outer membrane biogenesis; LPS lipid A biosynthesis. Functionally, catalyzes the N-acylation of UDP-3-O-acylglucosamine using 3-hydroxyacyl-ACP as the acyl donor. Is involved in the biosynthesis of lipid A, a phosphorylated glycolipid that anchors the lipopolysaccharide to the outer membrane of the cell. This is UDP-3-O-acylglucosamine N-acyltransferase from Chlorobium luteolum (strain DSM 273 / BCRC 81028 / 2530) (Pelodictyon luteolum).